We begin with the raw amino-acid sequence, 348 residues long: Anthranilate phosphoribosyltransferase (348 aa).

Residues Gly-93, 96–97 (GD), Thr-101, 103–106 (NVST), 121–129 (KHGNRAVSS), and Ser-133 contribute to the 5-phospho-alpha-D-ribose 1-diphosphate site. Gly-93 lines the anthranilate pocket. Ser-105 is a Mg(2+) binding site. Residue Asn-124 participates in anthranilate binding. Arg-179 is a binding site for anthranilate. The Mg(2+) site is built by Asp-238 and Glu-239.

This sequence belongs to the anthranilate phosphoribosyltransferase family. As to quaternary structure, homodimer. The cofactor is Mg(2+).

It catalyses the reaction N-(5-phospho-beta-D-ribosyl)anthranilate + diphosphate = 5-phospho-alpha-D-ribose 1-diphosphate + anthranilate. It participates in amino-acid biosynthesis; L-tryptophan biosynthesis; L-tryptophan from chorismate: step 2/5. Catalyzes the transfer of the phosphoribosyl group of 5-phosphorylribose-1-pyrophosphate (PRPP) to anthranilate to yield N-(5'-phosphoribosyl)-anthranilate (PRA). This chain is Anthranilate phosphoribosyltransferase, found in Desulfotalea psychrophila (strain LSv54 / DSM 12343).